A 196-amino-acid polypeptide reads, in one-letter code: DNA polymerase epsilon subunit D (196 aa).

The tract at residues 125–196 (RKKEKLDSGE…ETRVQNLEQT (72 aa)) is disordered. The span at 133–143 (GEVDADGDIDM) shows a compositional bias: acidic residues. Over residues 144–159 (GEDKENVPVEKVKEHD) the composition is skewed to basic and acidic residues. Residues 160–173 (EIEEQGDALQDVEE) are compositionally biased toward acidic residues. Over residues 174–188 (SSEKKQKTESQDVET) the composition is skewed to basic and acidic residues. Ser183 bears the Phosphoserine; by ATM or ATR mark.

DNA polymerase epsilon is a heterotetramer consisting of POL2, DPB2, DPB3 and DPB4. Component of the ISW2 complex, which at least consists of ISW2, ITC1, DLS1 and DPB4.

It is found in the nucleus. Its function is as follows. As accessory component of the DNA polymerase epsilon (DNA polymerase II) participates in chromosomal DNA replication. It is required during synthesis of the leading and lagging DNA strands at the replication fork and binds at/or near replication origins and moves along DNA with the replication fork. It has 3'-5' proofreading exonuclease activity that correct errors arising during DNA replication. It is also involved in DNA synthesis during DNA repair. Also functions as a component of the ISW2 complex, which acts in remodeling the chromatin by catalyzing an ATP-dependent alteration in the structure of nucleosomal DNA. The ISW2 complex is involved in coordinating transcriptional repression and in inheritance of telomeric silencing. It is involved in repression of MAT a-specific genes, INO1, and early meiotic genes during mitotic growth dependent upon transcription factor UME6 and in a parallel pathway to the RPD3-SIN3 histone deacetylase complex. This Saccharomyces cerevisiae (strain ATCC 204508 / S288c) (Baker's yeast) protein is DNA polymerase epsilon subunit D (DPB4).